The following is a 176-amino-acid chain: Adenine phosphoribosyltransferase (176 aa).

Belongs to the purine/pyrimidine phosphoribosyltransferase family. In terms of assembly, homodimer.

Its subcellular location is the cytoplasm. It catalyses the reaction AMP + diphosphate = 5-phospho-alpha-D-ribose 1-diphosphate + adenine. It participates in purine metabolism; AMP biosynthesis via salvage pathway; AMP from adenine: step 1/1. In terms of biological role, catalyzes a salvage reaction resulting in the formation of AMP, that is energically less costly than de novo synthesis. This Methylobacillus flagellatus (strain ATCC 51484 / DSM 6875 / VKM B-1610 / KT) protein is Adenine phosphoribosyltransferase.